A 196-amino-acid chain; its full sequence is 7-methyl-GTP pyrophosphatase (196 aa).

D69 acts as the Proton acceptor in catalysis.

Belongs to the Maf family. YceF subfamily. A divalent metal cation serves as cofactor.

It localises to the cytoplasm. It carries out the reaction N(7)-methyl-GTP + H2O = N(7)-methyl-GMP + diphosphate + H(+). Its function is as follows. Nucleoside triphosphate pyrophosphatase that hydrolyzes 7-methyl-GTP (m(7)GTP). May have a dual role in cell division arrest and in preventing the incorporation of modified nucleotides into cellular nucleic acids. This is 7-methyl-GTP pyrophosphatase from Photorhabdus laumondii subsp. laumondii (strain DSM 15139 / CIP 105565 / TT01) (Photorhabdus luminescens subsp. laumondii).